The sequence spans 345 residues: Nicotinate-nucleotide--dimethylbenzimidazole phosphoribosyltransferase (345 aa).

Residue Glu312 is the Proton acceptor of the active site.

This sequence belongs to the CobT family.

The catalysed reaction is 5,6-dimethylbenzimidazole + nicotinate beta-D-ribonucleotide = alpha-ribazole 5'-phosphate + nicotinate + H(+). It functions in the pathway nucleoside biosynthesis; alpha-ribazole biosynthesis; alpha-ribazole from 5,6-dimethylbenzimidazole: step 1/2. Catalyzes the synthesis of alpha-ribazole-5'-phosphate from nicotinate mononucleotide (NAMN) and 5,6-dimethylbenzimidazole (DMB). The polypeptide is Nicotinate-nucleotide--dimethylbenzimidazole phosphoribosyltransferase (Phocaeicola vulgatus (strain ATCC 8482 / DSM 1447 / JCM 5826 / CCUG 4940 / NBRC 14291 / NCTC 11154) (Bacteroides vulgatus)).